An 81-amino-acid polypeptide reads, in one-letter code: Exodeoxyribonuclease 7 small subunit (81 aa).

Positions 60 to 70 are enriched in basic and acidic residues; sequence LVDKDGNEKAL. Residues 60–81 form a disordered region; sequence LVDKDGNEKALDPQNASAPEEE.

It belongs to the XseB family. As to quaternary structure, heterooligomer composed of large and small subunits.

The protein localises to the cytoplasm. It carries out the reaction Exonucleolytic cleavage in either 5'- to 3'- or 3'- to 5'-direction to yield nucleoside 5'-phosphates.. Bidirectionally degrades single-stranded DNA into large acid-insoluble oligonucleotides, which are then degraded further into small acid-soluble oligonucleotides. The chain is Exodeoxyribonuclease 7 small subunit from Lactobacillus johnsonii (strain CNCM I-12250 / La1 / NCC 533).